Consider the following 463-residue polypeptide: Protoheme IX farnesyltransferase (463 aa).

Residues 1–193 form a unknown region; sequence MAESRTFTGL…AYFRLMKPRL (193 aa). Transmembrane regions (helical) follow at residues 6–26, 54–74, 89–109, and 115–135; these read TFTG…LAGA, LLVA…VVAM, AAII…AIVA, and ALPG…VLAL. The disordered stretch occupies residues 144 to 170; the sequence is GSDDETPVKNPTPAPEPAGDDTPDRTP. A run of 9 helical transmembrane segments spans residues 193-213, 218-238, 265-285, 286-306, 314-334, 336-356, 387-407, 409-429, and 441-461; these read LMWL…GQTL, VLLT…FNHV, ALAF…QVNA, LVAV…TLVL, TVLG…AADG, VGLP…AHFY, IVYY…LTPL, WLYA…VVLL, and AFHA…VDAL. Residues 194–460 form a protoheme IX prenyltransferase region; it reads MWLLCLVAAA…AVLIAIVVDA (267 aa).

In the C-terminal section; belongs to the UbiA prenyltransferase family. Protoheme IX farnesyltransferase subfamily.

It is found in the cell membrane. It carries out the reaction heme b + (2E,6E)-farnesyl diphosphate + H2O = Fe(II)-heme o + diphosphate. The protein operates within porphyrin-containing compound metabolism; heme O biosynthesis; heme O from protoheme: step 1/1. Its function is as follows. Converts heme B (protoheme IX) to heme O by substitution of the vinyl group on carbon 2 of heme B porphyrin ring with a hydroxyethyl farnesyl side group. The polypeptide is Protoheme IX farnesyltransferase (ctaB) (Haloarcula marismortui (strain ATCC 43049 / DSM 3752 / JCM 8966 / VKM B-1809) (Halobacterium marismortui)).